Consider the following 255-residue polypeptide: Fumarate reductase cytochrome b subunit (255 aa).

The next 5 helical transmembrane spans lie at 33–53 (TGLI…SILI), 78–98 (IVSV…FLAL), 126–146 (WFIQ…HLFV), 168–188 (FWLL…IGLY), and 208–228 (IKWA…GAYI). Residues H44, H93, H143, and H182 each coordinate heme b.

Belongs to the diheme cytochrome b FrdC family. In terms of assembly, part of an enzyme complex containing three subunits: a flavoprotein (frdA), an iron-sulfur protein (frdB), and diheme cytochrome b (frdC). Heme b serves as cofactor.

It localises to the cell inner membrane. The fumarate reductase enzyme complex is required for fumarate respiration. This subunit anchors the complex in the membrane and binds a diheme cytochrome b. This chain is Fumarate reductase cytochrome b subunit (frdC), found in Helicobacter pylori (strain J99 / ATCC 700824) (Campylobacter pylori J99).